Here is a 137-residue protein sequence, read N- to C-terminus: uncharacterized protein (137 aa).

Residues 1–15 form the signal peptide; the sequence is MKKLAIAGALLLLAG. The N-palmitoyl cysteine moiety is linked to residue cysteine 16. The S-diacylglycerol cysteine moiety is linked to residue cysteine 16.

Its subcellular location is the cell membrane. This is an uncharacterized protein from Escherichia coli (strain K12).